Here is a 270-residue protein sequence, read N- to C-terminus: Probable septum site-determining protein MinC (270 aa).

The disordered stretch occupies residues 105–129 (DRRAPSSKAADEAPVQQAEPAAPAA). Positions 116–129 (EAPVQQAEPAAPAA) are enriched in low complexity.

Belongs to the MinC family. As to quaternary structure, interacts with MinD and FtsZ.

Functionally, cell division inhibitor that blocks the formation of polar Z ring septums. Rapidly oscillates between the poles of the cell to destabilize FtsZ filaments that have formed before they mature into polar Z rings. Prevents FtsZ polymerization. The protein is Probable septum site-determining protein MinC of Burkholderia pseudomallei (strain 1106a).